The sequence spans 249 residues: Proteasome subunit alpha type-7-1A (249 aa).

It belongs to the peptidase T1A family. In terms of assembly, the 26S proteasome consists of a 20S proteasome core and two 19S regulatory subunits. The 20S proteasome core is composed of 28 subunits that are arranged in four stacked rings, resulting in a barrel-shaped structure. The two end rings are each formed by seven alpha subunits, and the two central rings are each formed by seven beta subunits. The catalytic chamber with the active sites is on the inside of the barrel. In terms of tissue distribution, testis specific.

It is found in the cytoplasm. The protein localises to the nucleus. The proteasome is a multicatalytic proteinase complex which is characterized by its ability to cleave peptides with Arg, Phe, Tyr, Leu, and Glu adjacent to the leaving group at neutral or slightly basic pH. The proteasome has an ATP-dependent proteolytic activity. In Drosophila melanogaster (Fruit fly), this protein is Proteasome subunit alpha type-7-1A (Prosalpha4T1).